The primary structure comprises 87 residues: UPF0335 protein Avi_3695 (87 aa).

The protein belongs to the UPF0335 family.

This is UPF0335 protein Avi_3695 from Allorhizobium ampelinum (strain ATCC BAA-846 / DSM 112012 / S4) (Agrobacterium vitis (strain S4)).